The chain runs to 299 residues: Lipoyl synthase 2 (299 aa).

Residues cysteine 45, cysteine 50, cysteine 56, cysteine 71, cysteine 75, cysteine 78, and serine 295 each coordinate [4Fe-4S] cluster. Residues 57–284 (YASGTATFLL…KSFCSKLGFK (228 aa)) form the Radical SAM core domain.

This sequence belongs to the radical SAM superfamily. Lipoyl synthase family. It depends on [4Fe-4S] cluster as a cofactor.

Its subcellular location is the cytoplasm. It carries out the reaction [[Fe-S] cluster scaffold protein carrying a second [4Fe-4S](2+) cluster] + N(6)-octanoyl-L-lysyl-[protein] + 2 oxidized [2Fe-2S]-[ferredoxin] + 2 S-adenosyl-L-methionine + 4 H(+) = [[Fe-S] cluster scaffold protein] + N(6)-[(R)-dihydrolipoyl]-L-lysyl-[protein] + 4 Fe(3+) + 2 hydrogen sulfide + 2 5'-deoxyadenosine + 2 L-methionine + 2 reduced [2Fe-2S]-[ferredoxin]. It functions in the pathway protein modification; protein lipoylation via endogenous pathway; protein N(6)-(lipoyl)lysine from octanoyl-[acyl-carrier-protein]: step 2/2. Catalyzes the radical-mediated insertion of two sulfur atoms into the C-6 and C-8 positions of the octanoyl moiety bound to the lipoyl domains of lipoate-dependent enzymes, thereby converting the octanoylated domains into lipoylated derivatives. The sequence is that of Lipoyl synthase 2 from Prochlorococcus marinus subsp. pastoris (strain CCMP1986 / NIES-2087 / MED4).